The following is a 485-amino-acid chain: Protein nucleotidyltransferase YdiU (485 aa).

ATP-binding residues include G90, G92, R93, K113, D125, G126, R176, and R183. The Proton acceptor role is filled by D252. 2 residues coordinate Mg(2+): N253 and D262. Residue D262 participates in ATP binding.

The protein belongs to the SELO family. Requires Mg(2+) as cofactor. The cofactor is Mn(2+).

The enzyme catalyses L-seryl-[protein] + ATP = 3-O-(5'-adenylyl)-L-seryl-[protein] + diphosphate. It catalyses the reaction L-threonyl-[protein] + ATP = 3-O-(5'-adenylyl)-L-threonyl-[protein] + diphosphate. It carries out the reaction L-tyrosyl-[protein] + ATP = O-(5'-adenylyl)-L-tyrosyl-[protein] + diphosphate. The catalysed reaction is L-histidyl-[protein] + UTP = N(tele)-(5'-uridylyl)-L-histidyl-[protein] + diphosphate. The enzyme catalyses L-seryl-[protein] + UTP = O-(5'-uridylyl)-L-seryl-[protein] + diphosphate. It catalyses the reaction L-tyrosyl-[protein] + UTP = O-(5'-uridylyl)-L-tyrosyl-[protein] + diphosphate. Functionally, nucleotidyltransferase involved in the post-translational modification of proteins. It can catalyze the addition of adenosine monophosphate (AMP) or uridine monophosphate (UMP) to a protein, resulting in modifications known as AMPylation and UMPylation. The protein is Protein nucleotidyltransferase YdiU of Aliivibrio fischeri (strain ATCC 700601 / ES114) (Vibrio fischeri).